The chain runs to 250 residues: GTP cyclohydrolase 1 type 2 homolog (250 aa).

A divalent metal cation contacts are provided by His63, His64, Asp100, His218, and Glu222.

This sequence belongs to the GTP cyclohydrolase I type 2/NIF3 family. In terms of assembly, homohexamer.

This chain is GTP cyclohydrolase 1 type 2 homolog, found in Pyrococcus abyssi (strain GE5 / Orsay).